A 299-amino-acid polypeptide reads, in one-letter code: Probable alpha-L-glutamate ligase (299 aa).

One can recognise an ATP-grasp domain in the interval 112–294; it reads LQLLTEQGIA…IALQMIVHIE (183 aa). ATP contacts are provided by residues Lys148, 185-186, Asp194, and 218-220; these read DF and RAN. Asp255, Glu267, and Asn269 together coordinate Mg(2+). Mn(2+) contacts are provided by Asp255, Glu267, and Asn269.

This sequence belongs to the RimK family. It depends on Mg(2+) as a cofactor. Requires Mn(2+) as cofactor.

In Histophilus somni (strain 2336) (Haemophilus somnus), this protein is Probable alpha-L-glutamate ligase.